The primary structure comprises 219 residues: Uracil-DNA glycosylase (219 aa).

The active-site Proton acceptor is the aspartate 61.

The protein belongs to the uracil-DNA glycosylase (UDG) superfamily. UNG family.

It is found in the cytoplasm. It carries out the reaction Hydrolyzes single-stranded DNA or mismatched double-stranded DNA and polynucleotides, releasing free uracil.. In terms of biological role, excises uracil residues from the DNA which can arise as a result of misincorporation of dUMP residues by DNA polymerase or due to deamination of cytosine. The protein is Uracil-DNA glycosylase of Neisseria meningitidis serogroup A / serotype 4A (strain DSM 15465 / Z2491).